The primary structure comprises 324 residues: MEPLSEPDASDPILTITGPTAVGKTAVSLEAAEQLNAEIVSVDSRQVYEELTIGTAKPSPSEQRRAPHHFIGERSLHEPFSAGAYAKAANDRIRAVLERGRRPLVVGGATLYLHALQYGLADIPDVDDEVRDELNQRLESEGQDALYEELQQVDPRQAAETDPTKTQKVIRALEVYHGTGKPLSYYYENQPEPPFDYVTVVLNRDREKLYDRINQRVDRMLDAGLLDEVRDVMDIDGVQLDEPPLSTIGYREPIQHLKGDIDYDEMVRLVKRNTRRYAKRQLTWFRRYDEYHWRAAPETRAEDLIEVLKNALDPTHSAAEGSAR.

18-25 is a binding site for ATP; that stretch reads GPTAVGKT. Substrate is bound at residue 20–25; it reads TAVGKT. The interval 43-46 is interaction with substrate tRNA; the sequence is DSRQ.

This sequence belongs to the IPP transferase family. Monomer. It depends on Mg(2+) as a cofactor.

The catalysed reaction is adenosine(37) in tRNA + dimethylallyl diphosphate = N(6)-dimethylallyladenosine(37) in tRNA + diphosphate. Its function is as follows. Catalyzes the transfer of a dimethylallyl group onto the adenine at position 37 in tRNAs that read codons beginning with uridine, leading to the formation of N6-(dimethylallyl)adenosine (i(6)A). This chain is tRNA dimethylallyltransferase, found in Salinibacter ruber (strain DSM 13855 / M31).